The primary structure comprises 123 residues: Small ribosomal subunit protein uS12 (123 aa).

The segment at 1-26 (MPTINQLVRKPRKSRSSLNKAPALQH) is disordered. Residue aspartate 90 is modified to 3-methylthioaspartic acid.

Belongs to the universal ribosomal protein uS12 family. Part of the 30S ribosomal subunit. Contacts proteins S8 and S17. May interact with IF1 in the 30S initiation complex.

Functionally, with S4 and S5 plays an important role in translational accuracy. In terms of biological role, interacts with and stabilizes bases of the 16S rRNA that are involved in tRNA selection in the A site and with the mRNA backbone. Located at the interface of the 30S and 50S subunits, it traverses the body of the 30S subunit contacting proteins on the other side and probably holding the rRNA structure together. The combined cluster of proteins S8, S12 and S17 appears to hold together the shoulder and platform of the 30S subunit. This chain is Small ribosomal subunit protein uS12, found in Ehrlichia chaffeensis (strain ATCC CRL-10679 / Arkansas).